Reading from the N-terminus, the 27-residue chain is Conotoxin Bt9.2 (27 aa).

3 cysteine pairs are disulfide-bonded: cysteine 2/cysteine 16, cysteine 6/cysteine 19, and cysteine 12/cysteine 24. Proline 13 carries the post-translational modification 4-hydroxyproline.

In terms of tissue distribution, expressed by the venom duct.

It is found in the secreted. In terms of biological role, probable neurotoxin that inhibits ion channels. The protein is Conotoxin Bt9.2 of Conus betulinus (Beech cone).